The primary structure comprises 180 residues: Ribulose bisphosphate carboxylase small subunit, chloroplastic 3 (180 aa).

A chloroplast-targeting transit peptide spans Met1–Gln56.

It belongs to the RuBisCO small chain family. Heterohexadecamer of 8 large and 8 small subunits.

Its subcellular location is the plastid. The protein resides in the chloroplast. RuBisCO catalyzes two reactions: the carboxylation of D-ribulose 1,5-bisphosphate, the primary event in carbon dioxide fixation, as well as the oxidative fragmentation of the pentose substrate. Both reactions occur simultaneously and in competition at the same active site. Although the small subunit is not catalytic it is essential for maximal activity. This is Ribulose bisphosphate carboxylase small subunit, chloroplastic 3 from Amaranthus hypochondriacus (Prince-of-Wales feather).